We begin with the raw amino-acid sequence, 76 residues long: Sulfur carrier protein TusA (76 aa).

Cys-14 functions as the Cysteine persulfide intermediate in the catalytic mechanism.

This sequence belongs to the sulfur carrier protein TusA family. As to quaternary structure, interacts with IscS.

Its subcellular location is the cytoplasm. It participates in tRNA modification. In terms of biological role, sulfur carrier protein involved in sulfur trafficking in the cell. Part of a sulfur-relay system required for 2-thiolation during synthesis of 2-thiouridine of the modified wobble base 5-methylaminomethyl-2-thiouridine (mnm(5)s(2)U) in tRNA. Interacts with IscS and stimulates its cysteine desulfurase activity. Accepts an activated sulfur from IscS, which is then transferred to TusD, and thus determines the direction of sulfur flow from IscS to 2-thiouridine formation. Also appears to be involved in sulfur transfer for the biosynthesis of molybdopterin. This chain is Sulfur carrier protein TusA, found in Buchnera aphidicola subsp. Acyrthosiphon pisum (strain 5A).